Here is a 277-residue protein sequence, read N- to C-terminus: Anamorsin homolog (277 aa).

The interval 1-134 (MALQGNVAIL…PFYPEFSDAV (134 aa)) is N-terminal SAM-like domain. Positions 135-191 (SFTSKKQSFESAAIPLAVKSTTTQPIKKWTVLADDFGDDQDDDIIDEDTLLDDTDEV) are linker. The [2Fe-2S] cluster site is built by C199, C210, C213, and C215. The tract at residues 199 to 215 (CGDAVGGKKRACKNCTC) is fe-S binding site A. 4 residues coordinate [4Fe-4S] cluster: C238, C241, C249, and C252. 2 short sequence motifs (cx2C motif) span residues 238–241 (CGNC) and 249–252 (CGSC). Positions 238–252 (CGNCFKGDAFRCGSC) are fe-S binding site B.

This sequence belongs to the anamorsin family. In terms of assembly, monomer. [2Fe-2S] cluster is required as a cofactor. [4Fe-4S] cluster serves as cofactor.

It is found in the cytoplasm. The protein localises to the mitochondrion intermembrane space. Functionally, component of the cytosolic iron-sulfur (Fe-S) protein assembly (CIA) machinery. Required for the maturation of extramitochondrial Fe-S proteins. Part of an electron transfer chain functioning in an early step of cytosolic Fe-S biogenesis, facilitating the de novo assembly of a [4Fe-4S] cluster on the cytosolic Fe-S scaffold complex. Electrons are transferred from NADPH via a FAD- and FMN-containing diflavin oxidoreductase. Together with the diflavin oxidoreductase, also required for the assembly of the diferric tyrosyl radical cofactor of ribonucleotide reductase (RNR), probably by providing electrons for reduction during radical cofactor maturation in the catalytic small subunit. This Phytophthora infestans (strain T30-4) (Potato late blight agent) protein is Anamorsin homolog.